The primary structure comprises 131 residues: Conotoxin Cal8.1 (131 aa).

The signal sequence occupies residues 1-19 (MKLLLTLLLGSALMCITLA). The propeptide occupies 20 to 38 (DECGLGTHRPVKEVIDNVR).

Contains 4 disulfide bonds. In terms of tissue distribution, expressed by the venom duct.

It localises to the secreted. Functionally, probable neurotoxin with unknown target. Possibly targets ion channels. This chain is Conotoxin Cal8.1, found in Californiconus californicus (California cone).